The chain runs to 153 residues: Ribosome maturation factor RimP (153 aa).

The protein belongs to the RimP family.

The protein localises to the cytoplasm. Functionally, required for maturation of 30S ribosomal subunits. This Nostoc punctiforme (strain ATCC 29133 / PCC 73102) protein is Ribosome maturation factor RimP.